Consider the following 246-residue polypeptide: Small ribosomal subunit protein uS2 (246 aa).

The segment at 224-246 (AKQGEEEAEAAEETAPETETTTA) is disordered. Residues 229-239 (EEAEAAEETAP) are compositionally biased toward acidic residues.

The protein belongs to the universal ribosomal protein uS2 family.

This chain is Small ribosomal subunit protein uS2, found in Bacillus velezensis (strain DSM 23117 / BGSC 10A6 / LMG 26770 / FZB42) (Bacillus amyloliquefaciens subsp. plantarum).